The primary structure comprises 490 residues: Cobyric acid synthase (490 aa).

The region spanning 252–439 is the GATase cobBQ-type domain; that stretch reads RLKVVVPVLP…LHGLFESTAA (188 aa). The active-site Nucleophile is Cys333. His431 is a catalytic residue.

The protein belongs to the CobB/CobQ family. CobQ subfamily.

It participates in cofactor biosynthesis; adenosylcobalamin biosynthesis. In terms of biological role, catalyzes amidations at positions B, D, E, and G on adenosylcobyrinic A,C-diamide. NH(2) groups are provided by glutamine, and one molecule of ATP is hydrogenolyzed for each amidation. The protein is Cobyric acid synthase of Pseudomonas aeruginosa (strain LESB58).